The primary structure comprises 482 residues: 23S rRNA (uracil(1939)-C(5))-methyltransferase RlmD (482 aa).

Cys-85, Cys-95, Cys-98, and Cys-177 together coordinate [4Fe-4S] cluster. 6 residues coordinate S-adenosyl-L-methionine: Gln-285, Phe-314, Asn-319, Glu-335, Asn-370, and Asp-391. Catalysis depends on Cys-438, which acts as the Nucleophile.

It belongs to the class I-like SAM-binding methyltransferase superfamily. RNA M5U methyltransferase family. RlmD subfamily.

The catalysed reaction is uridine(1939) in 23S rRNA + S-adenosyl-L-methionine = 5-methyluridine(1939) in 23S rRNA + S-adenosyl-L-homocysteine + H(+). Catalyzes the formation of 5-methyl-uridine at position 1939 (m5U1939) in 23S rRNA. This chain is 23S rRNA (uracil(1939)-C(5))-methyltransferase RlmD, found in Acidovorax sp. (strain JS42).